A 24-amino-acid chain; its full sequence is Iron-regulated 31 kDa protein (24 aa).

It is found in the periplasm. Its function is as follows. May be involved in iron uptake. This chain is Iron-regulated 31 kDa protein, found in Haemophilus influenzae.